The chain runs to 309 residues: Thiamine-monophosphate kinase (309 aa).

The Mg(2+) site is built by Asp25, Thr39, Ser40, and Asp41. Position 48 (Asp48) interacts with substrate. Residues Asp69 and Asp117 each contribute to the Mg(2+) site. Residues 116 to 117 (GD) and Arg140 contribute to the ATP site. Mg(2+) is bound at residue Asp201. Ser203 contributes to the ATP binding site. Asp204 lines the Mg(2+) pocket. The substrate site is built by Glu250 and Trp298.

It belongs to the thiamine-monophosphate kinase family.

It carries out the reaction thiamine phosphate + ATP = thiamine diphosphate + ADP. It functions in the pathway cofactor biosynthesis; thiamine diphosphate biosynthesis; thiamine diphosphate from thiamine phosphate: step 1/1. In terms of biological role, catalyzes the ATP-dependent phosphorylation of thiamine-monophosphate (TMP) to form thiamine-pyrophosphate (TPP), the active form of vitamin B1. The protein is Thiamine-monophosphate kinase of Pyrococcus horikoshii (strain ATCC 700860 / DSM 12428 / JCM 9974 / NBRC 100139 / OT-3).